The following is a 75-amino-acid chain: MSSGGLLLLLGFLTLWAELTPVSGQDRPKKPGLCPPRPQKPPCVRECKNDWSCPGEQKCCRYGCIFECRDPIFVK.

The signal sequence occupies residues 1 to 24; sequence MSSGGLLLLLGFLTLWAELTPVSG. A WAP domain is found at 27–72; sequence RPKKPGLCPPRPQKPPCVRECKNDWSCPGEQKCCRYGCIFECRDPI. 4 cysteine pairs are disulfide-bonded: Cys-34/Cys-60, Cys-43/Cys-64, Cys-47/Cys-59, and Cys-53/Cys-68.

This sequence belongs to the venom waprin family. Expressed by the venom gland.

The protein localises to the secreted. Functionally, damages membranes of susceptible bacteria. Has no hemolytic activity. Not toxic to mice. Does not inhibit the proteinases elastase and cathepsin G. This Austrelaps superbus (Lowland copperhead snake) protein is Supwaprin-a.